A 529-amino-acid polypeptide reads, in one-letter code: Bifunctional purine biosynthesis protein PurH (529 aa).

In terms of domain architecture, MGS-like spans 1–148 (MQQRRPVRRA…KNHKDVAIVV (148 aa)).

This sequence belongs to the PurH family.

The enzyme catalyses (6R)-10-formyltetrahydrofolate + 5-amino-1-(5-phospho-beta-D-ribosyl)imidazole-4-carboxamide = 5-formamido-1-(5-phospho-D-ribosyl)imidazole-4-carboxamide + (6S)-5,6,7,8-tetrahydrofolate. It catalyses the reaction IMP + H2O = 5-formamido-1-(5-phospho-D-ribosyl)imidazole-4-carboxamide. Its pathway is purine metabolism; IMP biosynthesis via de novo pathway; 5-formamido-1-(5-phospho-D-ribosyl)imidazole-4-carboxamide from 5-amino-1-(5-phospho-D-ribosyl)imidazole-4-carboxamide (10-formyl THF route): step 1/1. It functions in the pathway purine metabolism; IMP biosynthesis via de novo pathway; IMP from 5-formamido-1-(5-phospho-D-ribosyl)imidazole-4-carboxamide: step 1/1. This is Bifunctional purine biosynthesis protein PurH from Salmonella paratyphi C (strain RKS4594).